We begin with the raw amino-acid sequence, 825 residues long: MDVSLCPAKCSFWRIFLLGSVWLDYVGSVLACPANCVCSKTEINCRRPDDGNLFPLLEGQDSGNSNGNASINITDISRNITSIHIENWRSLHTLNAVDMELYTGLQKLTIKNSGLRSIQPRAFAKNPHLRYINLSSNRLTTLSWQLFQTLSLRELRLEQNFFNCSCDIRWMQLWQEQGEARLNSQNLYCINADGSQLPLFRMNISQCDLPEISVSHVNLTVREGDSAVITCNGSGSPLPDVDWIVTGLQSINTHQTNLNWTNVHAINLTLVNVTSEDNGFTLTCIAENVVGMSNASVALTVYYPPRVVSLEEPELRLEHCIEFVVRGNPPPTLYWLHNGQPLRESKIIHVEYYQEGEISEGCLLFNKPTHYNNGNYTLIAKNPLGTANQTINGHFLKEPFPESTDNFILFDEVSPTPPITVTHKPEEDTFGVSIAVGLAAFACVLLVVLFIMINKYGRRSKFGMKGPVAVISGEEDSASPLHHINHGITTPSSLDAGPDTVVIGMTRIPVIENPQYFRQGHNCHKPDTYVQHIKRRDIVLKRELGEGAFGKVFLAECYNLSPTKDKMLVAVKALKDPTLAARKDFQREAELLTNLQHEHIVKFYGVCGDGDPLIMVFEYMKHGDLNKFLRAHGPDAMILVDGQPXQAKGELGLSQMLHIASQIASGMVYLASQHFVHRDLATRNCXVGANLLVKIGDFGMSRDVYSTDYYRVGGHTMLPIRWMPPESIMYRKFTTESDVWSFGVILWEIFTYGKQPWFQLSNTEVIECITQGRVLERPRVCPKEVYDVMLGCWQREPQQRLNIKEIYKILHALGKATPIYLDILG.

The N-terminal stretch at 1-31 (MDVSLCPAKCSFWRIFLLGSVWLDYVGSVLA) is a signal peptide. Cystine bridges form between Cys-32-Cys-38 and Cys-36-Cys-45. Residues 32–429 (CPANCVCSKT…TVTHKPEEDT (398 aa)) lie on the Extracellular side of the membrane. Asn-68, Asn-72, and Asn-79 each carry an N-linked (GlcNAc...) asparagine glycan. 2 LRR repeats span residues 104–125 (GLQK…AFAK) and 128–149 (HLRY…LFQT). Asn-133 and Asn-163 each carry an N-linked (GlcNAc...) asparagine glycan. In terms of domain architecture, LRRCT spans 160-209 (NFFNCSCDIRWMQLWQEQGEARLNSQNLYCINADGSQLPLFRMNISQCDL). 2 cysteine pairs are disulfide-bonded: Cys-164/Cys-189 and Cys-166/Cys-207. N-linked (GlcNAc...) asparagine glycans are attached at residues Asn-203, Asn-218, Asn-232, Asn-259, Asn-267, Asn-272, and Asn-294. Ig-like C2-type domains follow at residues 210 to 300 (PEIS…VALT) and 309 to 382 (SLEE…IAKN). Cys-231 and Cys-284 form a disulfide bridge. Residues Cys-320 and Cys-362 are joined by a disulfide bond. Asn-375 and Asn-388 each carry an N-linked (GlcNAc...) asparagine glycan. The chain crosses the membrane as a helical span at residues 430–453 (FGVSIAVGLAAFACVLLVVLFIMI). Topologically, residues 454–825 (NKYGRRSKFG…ATPIYLDILG (372 aa)) are cytoplasmic. Ser-493 bears the Phosphoserine mark. Residue Tyr-516 is modified to Phosphotyrosine; by autocatalysis. The region spanning 538-825 (IVLKRELGEG…ATPIYLDILG (288 aa)) is the Protein kinase domain. ATP is bound by residues 544-552 (LGEGAFGKV) and Lys-572. Asp-679 serves as the catalytic Proton acceptor. A phosphotyrosine; by autocatalysis mark is found at Tyr-705, Tyr-709, and Tyr-710.

The protein belongs to the protein kinase superfamily. Tyr protein kinase family. Insulin receptor subfamily. Exists in a dynamic equilibrium between monomeric (low affinity) and dimeric (high affinity) structures. Binds SH2B2. Interacts with SQSTM1 and KIDINS220. Interacts with PTPRS. Interacts with MAPK8IP3/JIP3. Ligand-mediated auto-phosphorylation.

The protein resides in the membrane. The enzyme catalyses L-tyrosyl-[protein] + ATP = O-phospho-L-tyrosyl-[protein] + ADP + H(+). Functionally, receptor tyrosine kinase involved in nervous system and probably heart development. Upon binding of its ligand NTF3/neurotrophin-3, NTRK3 autophosphorylates and activates different signaling pathways, including the phosphatidylinositol 3-kinase/AKT and the MAPK pathways, that control cell survival and differentiation. The protein is NT-3 growth factor receptor (NTRK3) of Saimiri boliviensis boliviensis (Bolivian squirrel monkey).